Consider the following 313-residue polypeptide: Deoxyribonucleoside regulator (313 aa).

Positions 23 to 42 form a DNA-binding region, H-T-H motif; sequence QQQIAEQLNISRPTVSRLLQ.

It belongs to the SorC transcriptional regulatory family. As to quaternary structure, homooctamer.

In terms of biological role, negative regulator of the dra-nupC-pdp operon. DeoR binds cooperatively to the operator DNA, which consists of a palindrome and a direct repeat sequence located 3' to the palindrome. This chain is Deoxyribonucleoside regulator, found in Bacillus subtilis (strain 168).